The chain runs to 223 residues: Cytidylate kinase (223 aa).

The tract at residues methionine 1–arginine 23 is disordered. Glycine 12–serine 20 provides a ligand contact to ATP.

The protein belongs to the cytidylate kinase family. Type 1 subfamily.

It is found in the cytoplasm. It carries out the reaction CMP + ATP = CDP + ADP. The enzyme catalyses dCMP + ATP = dCDP + ADP. The polypeptide is Cytidylate kinase (Cutibacterium acnes (strain DSM 16379 / KPA171202) (Propionibacterium acnes)).